The sequence spans 403 residues: Solanesyl-diphosphate synthase 2, chloroplastic (403 aa).

Residues 1–62 (MLSVSCPRVY…QPGLAAVDVP (62 aa)) constitute a chloroplast transit peptide. Lys123, Arg126, and His161 together coordinate isopentenyl diphosphate. Residues Asp168 and Asp172 each coordinate Mg(2+). Arg177 is an an all-trans-polyprenyl diphosphate binding site. Residue Arg178 participates in isopentenyl diphosphate binding. 4 residues coordinate an all-trans-polyprenyl diphosphate: Lys254, Thr255, Gln292, and Lys309.

This sequence belongs to the FPP/GGPP synthase family. Homodimer. Interacts with FBN5. Requires Mg(2+) as cofactor. In terms of tissue distribution, expressed in leaves, stems and roots. Highest expression in leaves and roots.

Its subcellular location is the plastid. The protein resides in the chloroplast. The catalysed reaction is 7 isopentenyl diphosphate + (2E)-geranyl diphosphate = all-trans-nonaprenyl diphosphate + 7 diphosphate. In terms of biological role, involved in providing solanesyl diphosphate for plastoquinone-9 (PQ-9) formation. Geranyl diphosphate is the preferred substrate. The polypeptide is Solanesyl-diphosphate synthase 2, chloroplastic (Oryza sativa subsp. japonica (Rice)).